The following is a 225-amino-acid chain: Sugar fermentation stimulation protein homolog (225 aa).

This sequence belongs to the SfsA family.

The polypeptide is Sugar fermentation stimulation protein homolog (Sulfurisphaera tokodaii (strain DSM 16993 / JCM 10545 / NBRC 100140 / 7) (Sulfolobus tokodaii)).